The primary structure comprises 200 residues: Recombination protein RecR (200 aa).

The segment at 59–74 (CSTCGSLDTQDPCAIC) adopts a C4-type zinc-finger fold. Residues 82-177 (SLICVVEEVG…TVSMLARGVP (96 aa)) enclose the Toprim domain.

It belongs to the RecR family.

May play a role in DNA repair. It seems to be involved in an RecBC-independent recombinational process of DNA repair. It may act with RecF and RecO. This is Recombination protein RecR from Phenylobacterium zucineum (strain HLK1).